The sequence spans 158 residues: Transcription elongation factor GreA (158 aa).

Positions Glu-48 to Glu-74 form a coiled coil.

The protein belongs to the GreA/GreB family.

Necessary for efficient RNA polymerase transcription elongation past template-encoded arresting sites. The arresting sites in DNA have the property of trapping a certain fraction of elongating RNA polymerases that pass through, resulting in locked ternary complexes. Cleavage of the nascent transcript by cleavage factors such as GreA or GreB allows the resumption of elongation from the new 3'terminus. GreA releases sequences of 2 to 3 nucleotides. This is Transcription elongation factor GreA from Syntrophotalea carbinolica (strain DSM 2380 / NBRC 103641 / GraBd1) (Pelobacter carbinolicus).